A 247-amino-acid chain; its full sequence is ATP synthase subunit a, chloroplastic (247 aa).

5 helical membrane-spanning segments follow: residues glycine 36–glycine 56, valine 95–valine 115, isoleucine 134–serine 154, leucine 199–leucine 219, and glycine 220–glycine 240.

It belongs to the ATPase A chain family. F-type ATPases have 2 components, CF(1) - the catalytic core - and CF(0) - the membrane proton channel. CF(1) has five subunits: alpha(3), beta(3), gamma(1), delta(1), epsilon(1). CF(0) has four main subunits: a, b, b' and c.

It localises to the plastid. Its subcellular location is the chloroplast thylakoid membrane. In terms of biological role, key component of the proton channel; it plays a direct role in the translocation of protons across the membrane. This chain is ATP synthase subunit a, chloroplastic, found in Mesostigma viride (Green alga).